A 366-amino-acid polypeptide reads, in one-letter code: Peptide chain release factor 2 (366 aa).

Q249 is modified (N5-methylglutamine).

Belongs to the prokaryotic/mitochondrial release factor family. Methylated by PrmC. Methylation increases the termination efficiency of RF2.

The protein localises to the cytoplasm. Peptide chain release factor 2 directs the termination of translation in response to the peptide chain termination codons UGA and UAA. This chain is Peptide chain release factor 2, found in Petrotoga mobilis (strain DSM 10674 / SJ95).